Reading from the N-terminus, the 250-residue chain is rRNA methyltransferase 2, mitochondrial (250 aa).

The N-terminal 35 residues, 1 to 35, are a transit peptide targeting the mitochondrion; it reads MRLVFTGNCVFKRLLHTEIGGKYAKQQPRNLKGRS. Residues 90 to 93, Asp119, 136 to 137, and Asp161 contribute to the S-adenosyl-L-methionine site; these read PGSW and DF. The Proton acceptor role is filled by Lys201.

This sequence belongs to the class I-like SAM-binding methyltransferase superfamily. RNA methyltransferase RlmE family.

The protein resides in the mitochondrion. It carries out the reaction a uridine in rRNA + S-adenosyl-L-methionine = a 2'-O-methyluridine in rRNA + S-adenosyl-L-homocysteine + H(+). Functionally, S-adenosyl-L-methionine-dependent 2'-O-ribose methyltransferase that catalyzes the formation of 2'-O-methyluridine at position 1579 (Um1579) in the mitochondrial large subunit ribosomal RNA (mtLSU rRNA), a universally conserved modification in the peptidyl transferase domain of the mtLSU rRNA. This activity may require prior 2'-O-methylguanosine modification at position 1580 (Gm1580) by MRM3. Essential for late-stage assembly of mtLSU required for efficient translation of mitochondrial DNA encoded proteins; methyltransferase activity is not required for this function. Essential for mitochondrial respiratory function. The sequence is that of rRNA methyltransferase 2, mitochondrial from Drosophila melanogaster (Fruit fly).